Reading from the N-terminus, the 266-residue chain is 15-hydroxyprostaglandin dehydrogenase [NAD(+)] (266 aa).

Residues 12–20 (GAAQGIGRA), 36–37 (DW), 63–65 (CDV), and N91 each bind NAD(+). S138 and Q148 together coordinate substrate. Residue Y151 is the Proton acceptor of the active site. Residues 151 to 155 (YCASK) and 186 to 188 (VNT) contribute to the NAD(+) site.

Belongs to the short-chain dehydrogenases/reductases (SDR) family. As to quaternary structure, homodimer.

The protein resides in the cytoplasm. The catalysed reaction is prostaglandin E2 + NAD(+) = 15-oxoprostaglandin E2 + NADH + H(+). It carries out the reaction (15S)-hydroxy-(5Z,8Z,11Z,13E)-eicosatetraenoate + NAD(+) = 15-oxo-(5Z,8Z,11Z,13E)-eicosatetraenoate + NADH + H(+). The enzyme catalyses (11R)-hydroxy-(5Z,8Z,12E,14Z)-eicosatetraenoate + NAD(+) = 11-oxo-(5Z,8Z,12E,14Z)-eicosatetraenoate + NADH + H(+). It catalyses the reaction lipoxin A4 + NAD(+) = 15-oxo-(5S,6R)-dihydroxy-(7E,9E,11Z,13E)-eicosatetraenoate + NADH + H(+). The catalysed reaction is 15-oxo-(5S,6R)-dihydroxy-(7E,9E,11Z)-eicosatrienoate + NADH + H(+) = (5S,6R,15S)-trihydroxy-(7E,9E,11Z)-eicosatrienoate + NAD(+). It carries out the reaction prostaglandin A1 + NAD(+) = 15-oxo-prostaglandin A1 + NADH + H(+). The enzyme catalyses prostaglandin E1 + NAD(+) = 15-oxoprostaglandin E1 + NADH + H(+). It catalyses the reaction 14-hydroxy-(4Z,7Z,10Z,12E,16Z,19Z)-docosahexaenoate + NAD(+) = 14-oxo-(4Z,7Z,10Z,12E,16Z,19Z)-docosahexaenoate + NADH + H(+). The catalysed reaction is resolvin E1 + NAD(+) = 18-oxo-resolvin E1 + NADH + H(+). It carries out the reaction resolvin D1 + NAD(+) = 8-oxoresolvin D1 + NADH + H(+). The enzyme catalyses resolvin D1 + NAD(+) = 17-oxoresolvin D1 + NADH + H(+). It catalyses the reaction resolvin D2 + NAD(+) = 7-oxoresolvin D2 + NADH + H(+). The catalysed reaction is resolvin D2 + NAD(+) = 16-oxoresolvin D2 + NADH + H(+). Catalyzes the NAD-dependent dehydrogenation (oxidation) of a broad array of hydroxylated polyunsaturated fatty acids (mainly eicosanoids and docosanoids, including prostaglandins, lipoxins and resolvins), yielding their corresponding keto (oxo) metabolites. Decreases the levels of the pro-proliferative prostaglandins such as prostaglandin E2 (whose activity is increased in cancer because of an increase in the expression of cyclooxygenase 2) and generates oxo-fatty acid products that can profoundly influence cell function by abrogating pro-inflammatory cytokine expression. Converts resolvins E1, D1 and D2 to their oxo products, which represents a mode of resolvin inactivation. Resolvin E1 plays important roles during the resolution phase of acute inflammation, while resolvins D1 and D2 have a unique role in obesity-induced adipose inflammation. This is 15-hydroxyprostaglandin dehydrogenase [NAD(+)] (HPGD) from Macaca fascicularis (Crab-eating macaque).